The chain runs to 342 residues: DNA primase small subunit PriS (342 aa).

Catalysis depends on residues Asp97, Asp99, and Asp276.

It belongs to the eukaryotic-type primase small subunit family. As to quaternary structure, heterodimer of a small subunit (PriS) and a large subunit (PriL). Mg(2+) is required as a cofactor. Mn(2+) serves as cofactor.

Catalytic subunit of DNA primase, an RNA polymerase that catalyzes the synthesis of short RNA molecules used as primers for DNA polymerase during DNA replication. The small subunit contains the primase catalytic core and has DNA synthesis activity on its own. Binding to the large subunit stabilizes and modulates the activity, increasing the rate of DNA synthesis while decreasing the length of the DNA fragments, and conferring RNA synthesis capability. The DNA polymerase activity may enable DNA primase to also catalyze primer extension after primer synthesis. May also play a role in DNA repair. The polypeptide is DNA primase small subunit PriS (Thermococcus sibiricus (strain DSM 12597 / MM 739)).